The chain runs to 259 residues: Short-chain dehydrogenase reductase 5 (259 aa).

Residue 12-36 participates in NAD(+) binding; sequence IITGGASGIGAEAARLFTDHGAKVV. S144 serves as a coordination point for substrate. Y157 serves as the catalytic Proton acceptor.

The protein belongs to the short-chain dehydrogenases/reductases (SDR) family.

This Arabidopsis thaliana (Mouse-ear cress) protein is Short-chain dehydrogenase reductase 5 (SDR5).